Consider the following 115-residue polypeptide: Guanylin (115 aa).

The first 21 residues, 1 to 21 (MNACVLSVLCLLGAVAVLVEG), serve as a signal peptide directing secretion. Positions 22 to 100 (VTVQDGDLSF…LQRLEAIAQD (79 aa)) are excised as a propeptide. 3 disulfide bridges follow: Cys-69/Cys-82, Cys-104/Cys-112, and Cys-107/Cys-115.

Belongs to the guanylin family.

The protein localises to the secreted. Its function is as follows. Endogenous activator of intestinal guanylate cyclase. It stimulates this enzyme through the same receptor binding region as the heat-stable enterotoxins. In Notomys alexis (Spinifex hopping mouse), this protein is Guanylin (GUCA2A).